Reading from the N-terminus, the 185-residue chain is Small ribosomal subunit protein uS4c (185 aa).

Residues 72 to 134 form the S4 RNA-binding domain; the sequence is MRLDNVIFRL…PTSCNALKGE (63 aa). The interval 132–154 is disordered; it reads KGESPGGGETPDHLTASLSEGSR.

This sequence belongs to the universal ribosomal protein uS4 family. In terms of assembly, part of the 30S ribosomal subunit. Contacts protein S5. The interaction surface between S4 and S5 is involved in control of translational fidelity.

It is found in the plastid. It localises to the chloroplast. In terms of biological role, one of the primary rRNA binding proteins, it binds directly to 16S rRNA where it nucleates assembly of the body of the 30S subunit. Functionally, with S5 and S12 plays an important role in translational accuracy. The protein is Small ribosomal subunit protein uS4c (rps4) of Woodwardia radicans (Rooting chainfern).